The following is a 400-amino-acid chain: Elongation factor Tu (400 aa).

A tr-type G domain is found at 10–210 (KPHCNVGTIG…VDSYIPIPPR (201 aa)). A G1 region spans residues 19-26 (GHVDHGKT). 19–26 (GHVDHGKT) is a GTP binding site. Thr-26 lines the Mg(2+) pocket. The segment at 60 to 64 (GLTIA) is G2. The tract at residues 81 to 84 (DCPG) is G3. GTP contacts are provided by residues 81–85 (DCPGH) and 136–139 (NKCD). The tract at residues 136–139 (NKCD) is G4. A G5 region spans residues 174–176 (SAI).

Belongs to the TRAFAC class translation factor GTPase superfamily. Classic translation factor GTPase family. EF-Tu/EF-1A subfamily. Monomer.

The protein resides in the cytoplasm. The catalysed reaction is GTP + H2O = GDP + phosphate + H(+). In terms of biological role, GTP hydrolase that promotes the GTP-dependent binding of aminoacyl-tRNA to the A-site of ribosomes during protein biosynthesis. The polypeptide is Elongation factor Tu (Dehalococcoides mccartyi (strain ATCC BAA-2266 / KCTC 15142 / 195) (Dehalococcoides ethenogenes (strain 195))).